The primary structure comprises 353 residues: Guanine nucleotide-binding protein alpha-3 subunit (353 aa).

A lipid anchor (N-myristoyl glycine) is attached at glycine 2. Cysteine 4 carries the S-palmitoyl cysteine lipid modification. Positions 32-353 constitute a G-alpha domain; it reads KVVKLLLLGA…IQANLQGCGL (322 aa). The G1 motif stretch occupies residues 35 to 48; it reads KLLLLGAGECGKST. Residues 40–47, 176–182, 201–205, 270–273, and alanine 326 contribute to the GTP site; these read GAGECGKS, LLSRIKT, DVGGQ, and NKKD. Residues serine 47 and threonine 182 each contribute to the Mg(2+) site. The tract at residues 174–182 is G2 motif; sequence DILLSRIKT. The tract at residues 197–206 is G3 motif; sequence FRVFDVGGQR. Positions 266–273 are G4 motif; sequence ILFLNKKD. Residues 324–329 are G5 motif; the sequence is TCATDT.

It belongs to the G-alpha family. G(q) subfamily. As to quaternary structure, g proteins are composed of 3 units; alpha, beta and gamma. The alpha chain contains the guanine nucleotide binding site.

Its function is as follows. Guanine nucleotide-binding proteins (G proteins) are involved as modulators or transducers in various transmembrane signaling systems. Promotes transcription of 3',5'-cyclic phosphodiesterases pde-1 and pde-5, leading to reduced cGMP levels in sensory neurons. This causes suppression of insulin production and signaling which leads to increased daf-16 activity and contributes to increased adult lifespan and resistance to oxidative stress. In addition, by reducing cGMP levels, inhibits TGF-beta signaling pathways. Involved in behavioral response to P.aeruginosa by controlling the expression of daf-7, a member of the TGF-beta family, in ASJ sensory neurons. Plays a role in the avoidance response to the noxious chemical quinine in ASH sensory neurons. In Caenorhabditis elegans, this protein is Guanine nucleotide-binding protein alpha-3 subunit.